Consider the following 943-residue polypeptide: Nuclear receptor coactivator 7 (943 aa).

An N-acetylmethionine modification is found at Met-1. Over residues 1 to 15 (MDTKEEKKEQKERKQ) the composition is skewed to basic and acidic residues. Residues 1–32 (MDTKEEKKEQKERKQSYFARLKKKKQAKQNAE) are a coiled coil. The segment at 1 to 83 (MDTKEEKKEQ…RKSNQLKEIR (83 aa)) is disordered. A Phosphoserine modification is found at Ser-92. The 44-residue stretch at 117–160 (MEYTAGSQDTLNSVALKFNVTPNKLVELNKLFTHTIVPGQVLFV) folds into the LysM domain. The residue at position 137 (Thr-137) is a Phosphothreonine. Residues 169-189 (TIQLSSSTPGATVSPSSSDAE) are disordered. Residues 177 to 187 (PGATVSPSSSD) show a composition bias toward polar residues. Ser-182, Ser-186, Ser-211, Ser-212, and Ser-214 each carry phosphoserine. The disordered stretch occupies residues 334-369 (EKRQQNGERTLALDAKSVRSPEESTERTCTRIEPPD). Residues 349–369 (KSVRSPEESTERTCTRIEPPD) show a composition bias toward basic and acidic residues. Residues Ser-442, Ser-498, and Ser-500 each carry the phosphoserine modification. Basic and acidic residues predominate over residues 486–499 (EKQDEAPEVDKHSG). Disordered regions lie at residues 486-507 (EKQDEAPEVDKHSGSPENLGES) and 543-576 (LSDRKSIEPGGIDITLSSSLPQAGDSPPEDNKEP). Residues 782–943 (ALLENMHIEQ…VQDLEVWTFE (162 aa)) enclose the TLDc domain.

Belongs to the OXR1 family. In terms of assembly, interacts with ESR1, ESR2A, ESR2B, THRB, PPARG and RARA in a ligand-inducible manner. Interacts with the heterodimer AHR-ARNT. Highly expressed in brain and kidney. Weakly expressed in mammary gland, lung and testis. In brain, expression is found in neurons of cerebral cortex, thalamus, hypothalamus, hippocampus, cerebellum, striatum and choroid plexus.

It is found in the nucleus. In terms of biological role, enhances the transcriptional activities of several nuclear receptors. Involved in the coactivation of different nuclear receptors, such as ESR1, THRB, PPARG and RARA. This is Nuclear receptor coactivator 7 (Ncoa7) from Mus musculus (Mouse).